The chain runs to 133 residues: Small ribosomal subunit protein uS8 (133 aa).

The protein belongs to the universal ribosomal protein uS8 family. In terms of assembly, part of the 30S ribosomal subunit. Contacts proteins S5 and S12.

Its function is as follows. One of the primary rRNA binding proteins, it binds directly to 16S rRNA central domain where it helps coordinate assembly of the platform of the 30S subunit. This chain is Small ribosomal subunit protein uS8, found in Chlamydia pneumoniae (Chlamydophila pneumoniae).